A 1010-amino-acid polypeptide reads, in one-letter code: Outer kinetochore KNL1 complex subunit knl-1 (1010 aa).

9 repeat units span residues 85-88, 109-112, 228-231, 255-258, 278-281, 323-326, 346-349, 402-405, and 428-431. The tract at residues 85–431 is 9 X 4 AA repeats of M-[D/E]-[I/L/M]-[S/T]; it reads MDISESPACT…LQKEDLMDIS (347 aa). 2 coiled-coil regions span residues 820–915 and 956–988; these read RIVE…GLDK and KALRNVRSNMIALRSEKNALEMKVAEEHEKFAQ.

Component of the KNL1 complex composed of knl-1 and kbp-5. Part of the ten-subunit outer kinetochore KMN network that includes the KNL1, MIS12 and NDC80 complexes. Interacts with the protein phosphatase 1 (PP1) catalytic subunit gsp-1; the interaction is direct. Interacts with the protein phosphatase 1 (PP1) catalytic subunit gsp-2; the interaction is direct. Interacts with the MIS12 complex subunits kbp-1, kbp-2 and mis-12. Interacts with the NDC80 complex components ndc-80 and him-10. Interacts with knl-3. Interacts with kbp-3. Interacts with kbp-4. Interacts with kbp-5.

It localises to the cytoplasm. The protein resides in the cell cortex. It is found in the chromosome. Its subcellular location is the centromere. The protein localises to the kinetochore. Functionally, acts as a component of the outer kinetochore KNL1 complex that serves as a docking point for spindle assembly checkpoint components and mediates microtubule-kinetochore interactions. Kinetochores, consisting of a centromere-associated inner segment and a microtubule-contacting outer segment, play a crucial role in chromosome segregation by mediating the physical connection between centromeric DNA and spindle microtubules. The outer kinetochore is made up of the ten-subunit KMN network, comprising the MIS12, NDC80 and KNL1 complexes, and auxiliary microtubule-associated components; together they connect the outer kinetochore with the inner kinetochore, bind microtubules, and mediate interactions with mitotic checkpoint proteins that delay anaphase until chromosomes are bioriented on the spindle. Binds the protein phosphatase 1 catalytic subunits gsp-1 and gsp-2, which has a role in delaying formation of load-bearing kinetochore-microtubule attachments. Required for the recruitment of spindle-assembly checkpoint components bub-1 and mdf-1/2 to unattached kinetochores. Binds microtubules which plays a role in silencing of the spindle assembly checkpoint, but not the formation of load-bearing microtubule-kinetochore attachments. Has a role in the correct localization of the spindly-like protein spdl-1 and the RZZ complex that is composed of rod-1, czw-1 and zwl-1 to kinetochores. The protein is Outer kinetochore KNL1 complex subunit knl-1 (knl-1) of Caenorhabditis elegans.